The primary structure comprises 622 residues: DNA mismatch repair protein MutL (622 aa).

The protein belongs to the DNA mismatch repair MutL/HexB family.

In terms of biological role, this protein is involved in the repair of mismatches in DNA. It is required for dam-dependent methyl-directed DNA mismatch repair. May act as a 'molecular matchmaker', a protein that promotes the formation of a stable complex between two or more DNA-binding proteins in an ATP-dependent manner without itself being part of a final effector complex. This Clostridium acetobutylicum (strain ATCC 824 / DSM 792 / JCM 1419 / IAM 19013 / LMG 5710 / NBRC 13948 / NRRL B-527 / VKM B-1787 / 2291 / W) protein is DNA mismatch repair protein MutL.